The following is a 164-amino-acid chain: Elicitin-like protein 2 (164 aa).

The N-terminal stretch at 1–22 (MFSKTLVVLAAVAAVTVNGLTA) is a signal peptide. 3 cysteine pairs are disulfide-bonded: Cys25–Cys91, Cys47–Cys76, and Cys71–Cys118. A disordered region spans residues 121–164 (ISGGGSTPTTAPPSGTTPTTPTTAPPTGTTPGVTPSPTTPKPAC). Residues 127-156 (TPTTAPPSGTTPTTPTTAPPTGTTPGVTPS) show a composition bias toward low complexity.

It belongs to the elicitin family.

The protein resides in the secreted. Induces local and distal defense responses (incompatible hypersensitive reaction) in plants from the solanaceae and cruciferae families. Elicits leaf necrosis and causes the accumulation of pathogenesis-related proteins. Might interact with the lipidic molecules of the plasma membrane. The chain is Elicitin-like protein 2 (POD-2) from Pythium oligandrum (Mycoparasitic fungus).